The primary structure comprises 831 residues: uncharacterized protein (831 aa).

His787 functions as the Tele-phosphohistidine intermediate in the catalytic mechanism.

Belongs to the PEP-utilizing enzyme family.

This is an uncharacterized protein from Bacillus subtilis (strain 168).